Here is a 195-residue protein sequence, read N- to C-terminus: Imidazoleglycerol-phosphate dehydratase (195 aa).

The protein belongs to the imidazoleglycerol-phosphate dehydratase family.

Its subcellular location is the cytoplasm. It carries out the reaction D-erythro-1-(imidazol-4-yl)glycerol 3-phosphate = 3-(imidazol-4-yl)-2-oxopropyl phosphate + H2O. It functions in the pathway amino-acid biosynthesis; L-histidine biosynthesis; L-histidine from 5-phospho-alpha-D-ribose 1-diphosphate: step 6/9. The sequence is that of Imidazoleglycerol-phosphate dehydratase from Polynucleobacter asymbioticus (strain DSM 18221 / CIP 109841 / QLW-P1DMWA-1) (Polynucleobacter necessarius subsp. asymbioticus).